The primary structure comprises 69 residues: uncharacterized protein (69 aa).

Transmembrane regions (helical) follow at residues 7–29 (LLSG…LGSI) and 44–66 (ALQV…LGLL).

The protein resides in the cell membrane. This is an uncharacterized protein from Archaeoglobus fulgidus (strain ATCC 49558 / DSM 4304 / JCM 9628 / NBRC 100126 / VC-16).